The chain runs to 930 residues: Bifunctional uridylyltransferase/uridylyl-removing enzyme (930 aa).

The segment at 1–387 (MAPASEAGPA…IMGLFRRKKR (387 aa)) is uridylyltransferase. The segment at 388-741 (LKPEYSLVNG…LDPDPDRDAT (354 aa)) is uridylyl-removing. The region spanning 504-626 (VDEHTIQCIS…VRSKKRLDLL (123 aa)) is the HD domain. 2 ACT domains span residues 742-818 (RACF…VVAR) and 852-927 (IIEV…GAER).

This sequence belongs to the GlnD family. Requires Mg(2+) as cofactor.

It carries out the reaction [protein-PII]-L-tyrosine + UTP = [protein-PII]-uridylyl-L-tyrosine + diphosphate. The catalysed reaction is [protein-PII]-uridylyl-L-tyrosine + H2O = [protein-PII]-L-tyrosine + UMP + H(+). Its activity is regulated as follows. Uridylyltransferase (UTase) activity is inhibited by glutamine, while glutamine activates uridylyl-removing (UR) activity. Functionally, modifies, by uridylylation and deuridylylation, the PII regulatory proteins (GlnB and homologs), in response to the nitrogen status of the cell that GlnD senses through the glutamine level. Under low glutamine levels, catalyzes the conversion of the PII proteins and UTP to PII-UMP and PPi, while under higher glutamine levels, GlnD hydrolyzes PII-UMP to PII and UMP (deuridylylation). Thus, controls uridylylation state and activity of the PII proteins, and plays an important role in the regulation of nitrogen fixation and metabolism. This chain is Bifunctional uridylyltransferase/uridylyl-removing enzyme, found in Cereibacter sphaeroides (strain ATCC 17023 / DSM 158 / JCM 6121 / CCUG 31486 / LMG 2827 / NBRC 12203 / NCIMB 8253 / ATH 2.4.1.) (Rhodobacter sphaeroides).